The chain runs to 1137 residues: Phytochrome C (1137 aa).

Over residues 1–18 (MSSSRSNNRATCSRSSSA) the composition is skewed to low complexity. The interval 1-27 (MSSSRSNNRATCSRSSSARSKHSARVV) is disordered. One can recognise a GAF domain in the interval 217-400 (NLSLLCDVLV…VFGIQINKEV (184 aa)). Position 322 (C322) interacts with phytochromobilin. 2 PAS domains span residues 620 to 690 (VTNE…LQGI) and 750 to 824 (IQGD…TKLS). In terms of domain architecture, Histidine kinase spans 904 to 1124 (YIRQELRNPL…IVLVEFPVAQ (221 aa)).

It belongs to the phytochrome family. As to quaternary structure, homodimer. Post-translationally, contains one covalently linked phytochromobilin chromophore.

Its function is as follows. Regulatory photoreceptor which exists in two forms that are reversibly interconvertible by light: the Pr form that absorbs maximally in the red region of the spectrum and the Pfr form that absorbs maximally in the far-red region. Photoconversion of Pr to Pfr induces an array of morphogenic responses, whereas reconversion of Pfr to Pr cancels the induction of those responses. Pfr controls the expression of a number of nuclear genes including those encoding the small subunit of ribulose-bisphosphate carboxylase, chlorophyll A/B binding protein, protochlorophyllide reductase, rRNA, etc. It also controls the expression of its own gene(s) in a negative feedback fashion. The polypeptide is Phytochrome C (PHYC) (Oryza sativa subsp. japonica (Rice)).